The following is a 695-amino-acid chain: Follicle-stimulating hormone receptor (695 aa).

Positions 1-17 are cleaved as a signal peptide; it reads MSLLLVSLLAFLTLGSG. Cystine bridges form between Cys-18-Cys-25 and Cys-23-Cys-32. The 29-residue stretch at 18–46 folds into the LRRNT domain; that stretch reads CHHRICHCSNGVFLCQESKVTEIPPDLPR. Over 18 to 366 the chain is Extracellular; the sequence is CHHRICHCSN…EDIMGHDILR (349 aa). LRR repeat units follow at residues 49-72, 73-97, 98-118, 119-143, 144-169, 170-192, 193-216, 217-240, and 241-259; these read VELR…FGDL, EKIE…LPKL, HEIR…AFQN, LPNL…KIQS, LQKV…VGLS, FESM…AFNG, TQLD…VFQG, ASGP…GLEN, and LKKL…PSLE. N-linked (GlcNAc...) asparagine glycans are attached at residues Asn-191 and Asn-199. 4 cysteine pairs are disulfide-bonded: Cys-275-Cys-346, Cys-276-Cys-292, Cys-276-Cys-356, and Cys-292-Cys-338. Asn-293 carries an N-linked (GlcNAc...) asparagine glycan. Position 335 is a sulfotyrosine (Tyr-335). Residues 367-387 traverse the membrane as a helical segment; that stretch reads VLIWFISILAITGNIIVLVIL. At 388–398 the chain is on the cytoplasmic side; the sequence is ITSQYKLTVPR. Residues 399-421 traverse the membrane as a helical segment; the sequence is FLMCNLAFADLCIGIYLLLIASV. Over 422 to 443 the chain is Extracellular; that stretch reads DIHTKTQYHNYAIDWQTGAGCD. An intrachain disulfide couples Cys-442 to Cys-517. Residues 444 to 465 traverse the membrane as a helical segment; that stretch reads AAGFFTVFASELSVYTLTAITL. Over 466 to 485 the chain is Cytoplasmic; it reads ERWHTITHAMQLQCKVQLRH. A helical membrane pass occupies residues 486–508; the sequence is AASIMLVGWIFAFTVALFPIFGI. Topologically, residues 509–528 are extracellular; that stretch reads SSYMKVSICLPMDIDSPLSQ. Residues 529–550 form a helical membrane-spanning segment; that stretch reads LYVVSLLVLNVLAFVVICGCYT. Residues 551–573 lie on the Cytoplasmic side of the membrane; it reads HIYLTVRNPNIMSSSSDTKIAKR. The chain crosses the membrane as a helical span at residues 574 to 597; the sequence is MAMLIFTDFLCMAPISFFAISASL. Residues 598–608 are Extracellular-facing; sequence KVPLITVSKSK. A helical transmembrane segment spans residues 609–630; the sequence is ILLVLFYPINSCANPFLYAIFT. Residues 631-695 are Cytoplasmic-facing; that stretch reads KNFRRDVFIL…LIPLSRLAQN (65 aa).

It belongs to the G-protein coupled receptor 1 family. FSH/LSH/TSH subfamily. As to quaternary structure, homotrimer. Functions as a homotrimer binding the FSH hormone heterodimer composed of CGA and FSHB. Interacts with ARRB2. Interacts with APPL2; interaction is independent of follicle stimulating hormone stimulation. N-glycosylated; indirectly required for FSH-binding, possibly via a conformational change that allows high affinity binding of hormone. Post-translationally, sulfated.

It localises to the cell membrane. In terms of biological role, g protein-coupled receptor for follitropin, the follicle-stimulating hormone. Through cAMP production activates the downstream PI3K-AKT and ERK1/ERK2 signaling pathways. This is Follicle-stimulating hormone receptor (FSHR) from Sus scrofa (Pig).